The sequence spans 33 residues: SLLELGKMILQETGKMPSKSYGAYGCNCGVLGR.

It belongs to the phospholipase A2 family. Group II subfamily. K49 sub-subfamily. Homodimer; non-covalently linked. In terms of tissue distribution, expressed by the venom gland.

It is found in the secreted. Functionally, snake phospholipase A2 homolog that lacks enzymatic activity. May display myotoxin activity. In isolated heart decreases cardiac frequency. Also decreases mean arterial pressure. Does not show antimicrobial activity. Does not change renal parameters (such as perfusion pressure, renal vascular resistance, urinary flow, glomerular filtration rate and sodium tubular transport). The chain is Phospholipase A2 homolog BmarPLA2 from Bothrops marajoensis (Marajo lancehead).